The sequence spans 847 residues: Lethal(3)malignant brain tumor-like protein 1 (847 aa).

Basic and acidic residues-rich tracts occupy residues 65–82 and 144–155; these read FPRE…EKGV and AVKEGHAKKDGD. Disordered stretches follow at residues 65–87, 142–163, and 237–296; these read FPRE…SEPI, AEAV…PTSR, and VKKR…SEEK. 3 MBT repeats span residues 300-400, 408-507, and 516-611; these read WSWA…LQPP, FSWT…LTPP, and FIWE…LQPP. The tract at residues 473 to 480 is interaction with monomethylated and dimethylated peptides; sequence FDNWDDTY. Residues 639-682 form a CCHHC-type zinc finger; the sequence is SKYSFHHRKCPTPGCDGSGHVTGRFTAHYCLSGCPLAEKNQGKL. 4 residues coordinate Zn(2+): Cys648, Cys653, His666, and Cys672. The 65-residue stretch at 778–842 folds into the SAM domain; that stretch reads WTIDEVFSFV…YNAILMFKNA (65 aa).

In terms of assembly, homodimer.

The protein localises to the nucleus. Its function is as follows. Polycomb group (PcG) protein that specifically recognizes and binds mono- and dimethyllysine residues on target proteins, thereby acting as a 'reader' of a network of post-translational modifications. PcG proteins maintain the transcriptionally repressive state of genes: acts as a chromatin compaction factor by recognizing and binding mono- and dimethylated histone H1b/H1-4 at 'Lys-26' (H1bK26me1 and H1bK26me2) and histone H4 at 'Lys-20' (H4K20me1 and H4K20me2), leading to condense chromatin and repress transcription. In Gallus gallus (Chicken), this protein is Lethal(3)malignant brain tumor-like protein 1 (L3MBTL1).